Reading from the N-terminus, the 61-residue chain is Temporin-SN2 (61 aa).

An N-terminal signal peptide occupies residues 1–22 (MFTLKKTLLLLFFLGTINLSLC). Positions 23–44 (EEERNAEEERRDGDDEMDVEVK) are cleaved as a propeptide — removed in mature form. Position 61 is a lysine amide (lysine 61).

This sequence belongs to the frog skin active peptide (FSAP) family. Temporin subfamily. As to expression, expressed by the skin glands.

It localises to the secreted. Its function is as follows. Antimicrobial peptide. Active against some Gram-positive and Gram-negative bacterial strains. Active against fungus C.glabrata 090902 but not against C.albicans ATCC 12231. Shows very weak hemolytic activity against human erythrocytes. The protein is Temporin-SN2 of Sylvirana spinulosa (Fine-spined frog).